The following is a 1081-amino-acid chain: DNA-directed RNA polymerase subunit beta (1081 aa).

The protein belongs to the RNA polymerase beta chain family. As to quaternary structure, in plastids the minimal PEP RNA polymerase catalytic core is composed of four subunits: alpha, beta, beta', and beta''. When a (nuclear-encoded) sigma factor is associated with the core the holoenzyme is formed, which can initiate transcription.

It localises to the plastid. Its subcellular location is the chloroplast. The enzyme catalyses RNA(n) + a ribonucleoside 5'-triphosphate = RNA(n+1) + diphosphate. DNA-dependent RNA polymerase catalyzes the transcription of DNA into RNA using the four ribonucleoside triphosphates as substrates. This is DNA-directed RNA polymerase subunit beta from Cyanidium caldarium (Red alga).